The chain runs to 449 residues: Phosphoglucosamine mutase (449 aa).

Ser100 (phosphoserine intermediate) is an active-site residue. Mg(2+) is bound by residues Ser100, Asp240, Asp242, and Asp244. Phosphoserine is present on Ser100.

The protein belongs to the phosphohexose mutase family. The cofactor is Mg(2+). Post-translationally, activated by phosphorylation.

The enzyme catalyses alpha-D-glucosamine 1-phosphate = D-glucosamine 6-phosphate. Its function is as follows. Catalyzes the conversion of glucosamine-6-phosphate to glucosamine-1-phosphate. The sequence is that of Phosphoglucosamine mutase from Clostridium novyi (strain NT).